The chain runs to 356 residues: Probable dual-specificity RNA methyltransferase RlmN (356 aa).

The active-site Proton acceptor is Glu100. In terms of domain architecture, Radical SAM core spans Thr106–Asp340. Cys113 and Cys345 are oxidised to a cystine. [4Fe-4S] cluster-binding residues include Cys120, Cys124, and Cys127. S-adenosyl-L-methionine is bound by residues Gly167 to Glu168, Ser197, Ser226 to His228, and Asn302. Cys345 serves as the catalytic S-methylcysteine intermediate.

This sequence belongs to the radical SAM superfamily. RlmN family. [4Fe-4S] cluster is required as a cofactor.

Its subcellular location is the cytoplasm. The catalysed reaction is adenosine(2503) in 23S rRNA + 2 reduced [2Fe-2S]-[ferredoxin] + 2 S-adenosyl-L-methionine = 2-methyladenosine(2503) in 23S rRNA + 5'-deoxyadenosine + L-methionine + 2 oxidized [2Fe-2S]-[ferredoxin] + S-adenosyl-L-homocysteine. It catalyses the reaction adenosine(37) in tRNA + 2 reduced [2Fe-2S]-[ferredoxin] + 2 S-adenosyl-L-methionine = 2-methyladenosine(37) in tRNA + 5'-deoxyadenosine + L-methionine + 2 oxidized [2Fe-2S]-[ferredoxin] + S-adenosyl-L-homocysteine. Its function is as follows. Specifically methylates position 2 of adenine 2503 in 23S rRNA and position 2 of adenine 37 in tRNAs. This is Probable dual-specificity RNA methyltransferase RlmN from Prochlorococcus marinus (strain MIT 9303).